The chain runs to 468 residues: Gasdermin-C (468 aa).

The triggers pyroptosis stretch occupies residues 1–230 (MSYTFDWLSK…CVILTSANTK (230 aa)).

This sequence belongs to the gasdermin family. As to quaternary structure, homooligomer; homooligomeric ring-shaped pore complex containing 27-28 subunits when inserted in the membrane. In terms of processing, cleavage by CASP8 relieves autoinhibition by releasing the N-terminal moiety (Gasdermin-C, N-terminal) that initiates pyroptosis. Post-translationally, palmitoylated.

It is found in the cytoplasm. The protein localises to the cytosol. Its subcellular location is the cell membrane. Its activity is regulated as follows. The full-length protein before cleavage is inactive: intramolecular interactions between N- and C-terminal domains mediate autoinhibition in the absence of activation signal. The intrinsic pyroptosis-inducing activity is carried by the released N-terminal moiety (Gasdermin-C, N-terminal) following cleavage by caspase CASP8. Its function is as follows. This form constitutes the precursor of the pore-forming protein: upon cleavage, the released N-terminal moiety (Gasdermin-C, N-terminal) binds to membranes and forms pores, triggering pyroptosis. Functionally, pore-forming protein that causes membrane permeabilization and pyroptosis. Produced by the cleavage of gasdermin-C by caspase CASP8 in response to death signals. After cleavage, moves to the plasma membrane where it strongly binds to membrane inner leaflet lipids. Homooligomerizes within the membrane and forms pores of 10-15 nanometers (nm) of inner diameter, triggering pyroptosis. This Mus musculus (Mouse) protein is Gasdermin-C.